We begin with the raw amino-acid sequence, 483 residues long: Glycogen synthase (483 aa).

Lys18 contributes to the ADP-alpha-D-glucose binding site.

Belongs to the glycosyltransferase 1 family. Bacterial/plant glycogen synthase subfamily.

It catalyses the reaction [(1-&gt;4)-alpha-D-glucosyl](n) + ADP-alpha-D-glucose = [(1-&gt;4)-alpha-D-glucosyl](n+1) + ADP + H(+). It participates in glycan biosynthesis; glycogen biosynthesis. Synthesizes alpha-1,4-glucan chains using ADP-glucose. In Rhodopseudomonas palustris (strain TIE-1), this protein is Glycogen synthase.